The sequence spans 245 residues: Ribonuclease 3 (245 aa).

Residues 18-146 enclose the RNase III domain; that stretch reads LSEFLENLSI…FVGAIYLDSG (129 aa). Glu-59 provides a ligand contact to Mg(2+). The active site involves Asp-63. Residues Asp-132 and Glu-135 each contribute to the Mg(2+) site. The active site involves Glu-135. Residues 173–242 enclose the DRBM domain; the sequence is DYKSLLQEYV…AEVALKAMED (70 aa).

Belongs to the ribonuclease III family. In terms of assembly, homodimer. Mg(2+) is required as a cofactor.

It is found in the cytoplasm. The catalysed reaction is Endonucleolytic cleavage to 5'-phosphomonoester.. Functionally, digests double-stranded RNA. Involved in the processing of primary rRNA transcript to yield the immediate precursors to the large and small rRNAs (23S and 16S). Processes some mRNAs, and tRNAs when they are encoded in the rRNA operon. Processes pre-crRNA and tracrRNA of type II CRISPR loci if present in the organism. This Borreliella afzelii (strain PKo) (Borrelia afzelii) protein is Ribonuclease 3.